Here is a 411-residue protein sequence, read N- to C-terminus: Putative ion-transport protein YfeO (411 aa).

The next 11 membrane-spanning stretches (helical) occupy residues 9–29 (MLLL…VLIA), 54–74 (DSPF…GLII), 99–119 (ALPG…SLGP), 149–169 (ILAS…AALI), 186–206 (LFAP…FFHP), 223–243 (IASG…AVWC), 258–278 (VLIL…GGPL), 296–316 (LGAG…VIAA), 322–342 (GGRI…LHAH), 343–363 (VEAV…VLVV), and 386–406 (LLCI…LLAA).

This sequence belongs to the chloride channel (TC 2.A.49) family.

It localises to the cell membrane. This chain is Putative ion-transport protein YfeO, found in Salmonella paratyphi A (strain ATCC 9150 / SARB42).